Consider the following 378-residue polypeptide: Erythronate-4-phosphate dehydrogenase (378 aa).

Serine 45 and threonine 66 together coordinate substrate. Positions 146 and 175 each coordinate NAD(+). The active site involves arginine 208. Residue aspartate 232 coordinates NAD(+). Residue glutamate 237 is part of the active site. Residue histidine 254 is the Proton donor of the active site. An NAD(+)-binding site is contributed by glycine 257. Tyrosine 258 is a binding site for substrate.

This sequence belongs to the D-isomer specific 2-hydroxyacid dehydrogenase family. PdxB subfamily. As to quaternary structure, homodimer.

Its subcellular location is the cytoplasm. The catalysed reaction is 4-phospho-D-erythronate + NAD(+) = (R)-3-hydroxy-2-oxo-4-phosphooxybutanoate + NADH + H(+). It functions in the pathway cofactor biosynthesis; pyridoxine 5'-phosphate biosynthesis; pyridoxine 5'-phosphate from D-erythrose 4-phosphate: step 2/5. Its function is as follows. Catalyzes the oxidation of erythronate-4-phosphate to 3-hydroxy-2-oxo-4-phosphonooxybutanoate. The polypeptide is Erythronate-4-phosphate dehydrogenase (Escherichia coli O81 (strain ED1a)).